The primary structure comprises 413 residues: Probable aminotransferase sirI (413 aa).

Lys-255 is subject to N6-(pyridoxal phosphate)lysine.

This sequence belongs to the class-I pyridoxal-phosphate-dependent aminotransferase family. Pyridoxal 5'-phosphate serves as cofactor.

The protein operates within mycotoxin biosynthesis. Probable aminotransferase; part of the gene cluster that mediates the biosynthesis of sirodesmin PL, an epipolythiodioxopiperazine (ETP) characterized by a disulfide bridged cyclic dipeptide and that acts as a phytotoxin which is involved in the blackleg didease of canola. SirD catalyzes the O-prenylation of L-tyrosine (L-Tyr) in the presence of dimethylallyl diphosphate (DMAPP) to yield 4-O-dimethylallyl-L-Tyr, and therefore represents probably the first pathway-specific enzyme in the biosynthesis of sirodesmin PL. 4-O-dimethylallyl-L-Tyr, then undergoes condensation with L-Ser in a reaction catalyzed by the non-ribosomal peptide synthase sirP to form the diketopiperazine (DKP) backbone. Further bishydroxylation of the DKP performed by the cytochrome P450 monooxygenase sirC leads to the production of the intermediate phomamide. This step is essential to form the reactive thiol group required for toxicity of sirodesmin PL. The next steps of sirodesmin biosynthesis are not well understood yet, but some predictions could be made from intermediate compounds identification. Phomamide is converted into phomalizarine via oxidation, probably by sirT. Further oxidation, methylation (by sirM or sirN) and reduction steps convert phomalizarine to deacetyl sirodesmin. Finally, acetyltransferase sirH probably acetylates deacetyl sirodesmin to produce sirodesmin PL. The chain is Probable aminotransferase sirI from Leptosphaeria maculans (Blackleg fungus).